A 362-amino-acid chain; its full sequence is E3 ubiquitin-protein ligase TM129 (362 aa).

Over 1-6 (MDSPEV) the chain is Lumenal. Residues 7–27 (TFTLAYLVFAVCFVFTPNEFH) traverse the membrane as a helical segment. Residues 28–56 (AAGLTVQNLLSGWLGSEDAAFVPFHLRRT) are Cytoplasmic-facing. Residues 57-77 (AATLLCHSLLPLGYYVGMCLA) traverse the membrane as a helical segment. At 78–94 (ASEKRLHALSQAPEAWR) the chain is on the lumenal side. Residues 95-115 (LFLLLAVTLPSIACILIYYWS) form a helical membrane-spanning segment. Residues 116–362 (RDRWACHPLA…FCILDVCTVR (247 aa)) are Cytoplasmic-facing. The RING-type; degenerate zinc finger occupies 285–350 (CIGCMQTRAS…ASRVPCPTCR (66 aa)).

It belongs to the TMEM129 family. As to quaternary structure, integral component of ER-resident dislocation complexes.

The protein resides in the endoplasmic reticulum membrane. It carries out the reaction S-ubiquitinyl-[E2 ubiquitin-conjugating enzyme]-L-cysteine + [acceptor protein]-L-lysine = [E2 ubiquitin-conjugating enzyme]-L-cysteine + N(6)-ubiquitinyl-[acceptor protein]-L-lysine.. The protein operates within protein modification; protein ubiquitination. In terms of biological role, E3 ubiquitin-protein ligase involved in ER-associated protein degradation, preferentially associates with the E2 enzyme UBE2J2. Exploited by viral US11 proteins to mediate HLA class I proteins degradation. The chain is E3 ubiquitin-protein ligase TM129 (TMEM129) from Homo sapiens (Human).